We begin with the raw amino-acid sequence, 117 residues long: Large ribosomal subunit protein bL20 (117 aa).

This sequence belongs to the bacterial ribosomal protein bL20 family.

In terms of biological role, binds directly to 23S ribosomal RNA and is necessary for the in vitro assembly process of the 50S ribosomal subunit. It is not involved in the protein synthesizing functions of that subunit. The polypeptide is Large ribosomal subunit protein bL20 (Rickettsia felis (strain ATCC VR-1525 / URRWXCal2) (Rickettsia azadi)).